We begin with the raw amino-acid sequence, 572 residues long: 3-ketosteroid oxygenase (572 aa).

A run of 2 helical transmembrane segments spans residues 52–72 and 84–104; these read AFALSHHIIMGIYLLILRNFL and YFMRVFIVHIIYIIISYFIRI.

Belongs to the cytochrome P450 family. As to expression, expressed in the 2 embryonic head hypodermal cells XXXL/R.

It is found in the membrane. It carries out the reaction 5alpha-cholest-7-en-3-one + 3 reduced [NADPH--hemoprotein reductase] + 3 O2 = (25S)-Delta7-dafachronate + 3 oxidized [NADPH--hemoprotein reductase] + 4 H2O + 4 H(+). It catalyses the reaction cholest-4-en-3-one + 3 reduced [NADPH--hemoprotein reductase] + 3 O2 = (25S)-3-oxocholest-4-en-26-oate + 3 oxidized [NADPH--hemoprotein reductase] + 4 H2O + 4 H(+). It participates in steroid hormone biosynthesis; dafachronic acid biosynthesis. Functionally, converts the 3-keto steroids 4-cholesten-3-one and lathosterone into the carboxylic metabolites 3-keto-4-cholestenate (Delta(4)-dafachronic acid, Delta(4)-DA) and 3-keto-7,(5a)-cholestenate (Delta(7)-dafachronic acid, Delta(7)-DA) respectively, by catalyzing successive oxidations at C-26. Dafachronic acids bind directly to the nuclear hormone receptor (NHR) DAF-12, suppressing dauer formation and inducing reproductive growth. In a non-cell autonomous manner, negatively regulates body wall muscle arm extensions to motor neurons probably by preventing daf-12 isoform b activation. May be involved in thermotolerance. The chain is 3-ketosteroid oxygenase (daf-9) from Caenorhabditis elegans.